The chain runs to 390 residues: 8-amino-7-oxononanoate synthase (390 aa).

Substrate is bound at residue Arg19. Pyridoxal 5'-phosphate is bound at residue 106 to 107 (GY). His131 contributes to the substrate binding site. Positions 176, 204, and 233 each coordinate pyridoxal 5'-phosphate. Lys236 bears the N6-(pyridoxal phosphate)lysine mark. A substrate-binding site is contributed by Thr350.

It belongs to the class-II pyridoxal-phosphate-dependent aminotransferase family. BioF subfamily. As to quaternary structure, homodimer. Pyridoxal 5'-phosphate serves as cofactor.

The enzyme catalyses 6-carboxyhexanoyl-[ACP] + L-alanine + H(+) = (8S)-8-amino-7-oxononanoate + holo-[ACP] + CO2. It functions in the pathway cofactor biosynthesis; biotin biosynthesis. Catalyzes the decarboxylative condensation of pimeloyl-[acyl-carrier protein] and L-alanine to produce 8-amino-7-oxononanoate (AON), [acyl-carrier protein], and carbon dioxide. The protein is 8-amino-7-oxononanoate synthase of Pseudomonas entomophila (strain L48).